Reading from the N-terminus, the 447-residue chain is Argininosuccinate synthase (447 aa).

Residues Ala17–Ser25 and Ala43 contribute to the ATP site. An L-citrulline-binding site is contributed by Tyr99. Residues Gly129 and Thr131 each contribute to the ATP site. L-aspartate is bound by residues Thr131, Asn135, and Asp136. Asn135 contacts L-citrulline. Residue Asp136 coordinates ATP. L-citrulline-binding residues include Arg139 and Ser192. Asp194 contributes to the ATP binding site. Residues Thr201, Glu203, and Glu280 each contribute to the L-citrulline site.

Belongs to the argininosuccinate synthase family. Type 2 subfamily. In terms of assembly, homotetramer.

It is found in the cytoplasm. It carries out the reaction L-citrulline + L-aspartate + ATP = 2-(N(omega)-L-arginino)succinate + AMP + diphosphate + H(+). The protein operates within amino-acid biosynthesis; L-arginine biosynthesis; L-arginine from L-ornithine and carbamoyl phosphate: step 2/3. The chain is Argininosuccinate synthase from Shigella dysenteriae serotype 1 (strain Sd197).